A 139-amino-acid chain; its full sequence is Ribulose bisphosphate carboxylase small subunit (139 aa).

It belongs to the RuBisCO small chain family. In terms of assembly, heterohexadecamer of 8 large and 8 small subunits.

It is found in the plastid. It localises to the chloroplast. RuBisCO catalyzes two reactions: the carboxylation of D-ribulose 1,5-bisphosphate, the primary event in carbon dioxide fixation, as well as the oxidative fragmentation of the pentose substrate in the photorespiration process. Both reactions occur simultaneously and in competition at the same active site. Although the small subunit is not catalytic it is essential for maximal activity. This Detonula confervacea (Marine diatom) protein is Ribulose bisphosphate carboxylase small subunit.